Here is a 396-residue protein sequence, read N- to C-terminus: ATP-dependent RNA helicase eIF4A (396 aa).

The segment at 1-20 is disordered; sequence MADKGLEDVPEGQIESNYDE. The Q motif motif lies at 23 to 51; that stretch reads DSFDAMNLKAELLRGVYAYGFERPSAIQQ. The 171-residue stretch at 54-224 folds into the Helicase ATP-binding domain; that stretch reads IMPVIKGHDV…TKFMRDPVRI (171 aa). Residue 67–74 coordinates ATP; the sequence is AQSGTGKT. The short motif at 172 to 175 is the DEAD box element; the sequence is DEAD. The Helicase C-terminal domain occupies 235–396; sequence GIKQFYIAVE…EMPMNVADLI (162 aa).

This sequence belongs to the DEAD box helicase family. eIF4A subfamily. Component of the eIF4F complex, which composition varies with external and internal environmental conditions. It is composed of at least eIF4A, eIF4E and eIF4G.

The protein resides in the cytoplasm. The catalysed reaction is ATP + H2O = ADP + phosphate + H(+). ATP-dependent RNA helicase which is a subunit of the eIF4F complex involved in cap recognition and is required for mRNA binding to ribosome. In the current model of translation initiation, eIF4A unwinds RNA secondary structures in the 5'-UTR of mRNAs which is necessary to allow efficient binding of the small ribosomal subunit, and subsequent scanning for the initiator codon. The chain is ATP-dependent RNA helicase eIF4A (TIF1) from Phaeosphaeria nodorum (strain SN15 / ATCC MYA-4574 / FGSC 10173) (Glume blotch fungus).